The following is an 827-amino-acid chain: Cadherin-17 (827 aa).

The N-terminal stretch at 1–21 is a signal peptide; the sequence is MVSAQLHFLCLLTLYLTGAYG. The Extracellular portion of the chain corresponds to 22–786; the sequence is QEGKFSGPLK…NQVGIPTVGM (765 aa). 7 Cadherin domains span residues 29–127, 128–243, 244–339, 340–448, 449–565, 566–666, and 667–776; these read PLKP…TFLQ, TKYE…APEP, VEIR…PPTC, LSQV…IPIF, ERSD…VPVF, PQQI…PPRL, and AKDY…RPAG. N-linked (GlcNAc...) asparagine glycans are attached at residues Asn148, Asn183, Asn249, Asn418, Asn545, Asn573, and Asn721. The chain crosses the membrane as a helical span at residues 787–807; that stretch reads AVGILLTTFLVIGIILAVVFI. At 808–827 the chain is on the cytoplasmic side; that stretch reads RMRKDKVEDPQSPENKPLRS.

As to expression, liver and intestine.

It is found in the cell membrane. Functionally, cadherins are calcium-dependent cell adhesion proteins. They preferentially interact with themselves in a homophilic manner in connecting cells; cadherins may thus contribute to the sorting of heterogeneous cell types. LI-cadherin may have a role in the morphological organization of liver and intestine. The protein is Cadherin-17 (Cdh17) of Rattus norvegicus (Rat).